Reading from the N-terminus, the 549-residue chain is Formate--tetrahydrofolate ligase (549 aa).

Thr-60–Thr-67 contributes to the ATP binding site.

The protein belongs to the formate--tetrahydrofolate ligase family.

The catalysed reaction is (6S)-5,6,7,8-tetrahydrofolate + formate + ATP = (6R)-10-formyltetrahydrofolate + ADP + phosphate. It participates in one-carbon metabolism; tetrahydrofolate interconversion. This chain is Formate--tetrahydrofolate ligase, found in Campylobacter concisus (strain 13826).